We begin with the raw amino-acid sequence, 247 residues long: 2,5-diamino-6-ribosylamino-4(3H)-pyrimidinone 5'-phosphate reductase (247 aa).

NADP(+)-binding positions include T75, D79, G165, and 187-191 (GASII).

This sequence belongs to the HTP reductase family. Homodimer.

It carries out the reaction 2,5-diamino-6-(1-D-ribitylamino)pyrimidin-4(3H)-one 5'-phosphate + NADP(+) = 2,5-diamino-6-(1-D-ribosylamino)pyrimidin-4(3H)-one 5'-phosphate + NADPH + H(+). The catalysed reaction is 2,5-diamino-6-(1-D-ribitylamino)pyrimidin-4(3H)-one 5'-phosphate + NAD(+) = 2,5-diamino-6-(1-D-ribosylamino)pyrimidin-4(3H)-one 5'-phosphate + NADH + H(+). It participates in cofactor biosynthesis; riboflavin biosynthesis. Functionally, catalyzes an early step in riboflavin biosynthesis, the NADPH-dependent reduction of the ribose side chain of 2,5-diamino-6-ribosylamino-4(3H)-pyrimidinone 5'-phosphate, yielding 2,5-diamino-6-ribitylamino-4(3H)-pyrimidinone 5'-phosphate. The sequence is that of 2,5-diamino-6-ribosylamino-4(3H)-pyrimidinone 5'-phosphate reductase (RIB7) from Debaryomyces hansenii (strain ATCC 36239 / CBS 767 / BCRC 21394 / JCM 1990 / NBRC 0083 / IGC 2968) (Yeast).